The chain runs to 222 residues: FCS-Like Zinc finger 13 (222 aa).

Residues 149-192 (EFLSSCCLCKKKLQGKDIYMYKGEMGFCSAECRSVQIMNDERQE) form an FLZ-type zinc finger.

It belongs to the FLZ family. Interacts with KIN10 and KIN11 via its FLZ-type zinc finger domain. Interacts with KINB1, KINB2, KINB3 and SNF4 via its N-terminal part.

It localises to the nucleus. The protein resides in the cytoplasm. May act as an adapter to facilitate the interaction of SnRK1 complex with effector proteins, conferring tissue- and stimulus-type specific differences in the SnRK1 regulation pathway. This chain is FCS-Like Zinc finger 13, found in Arabidopsis thaliana (Mouse-ear cress).